The primary structure comprises 212 residues: Nucleoside triphosphate pyrophosphatase (212 aa).

Asp-79 functions as the Proton acceptor in the catalytic mechanism.

Belongs to the Maf family. A divalent metal cation serves as cofactor.

The protein resides in the cytoplasm. It catalyses the reaction a ribonucleoside 5'-triphosphate + H2O = a ribonucleoside 5'-phosphate + diphosphate + H(+). The catalysed reaction is a 2'-deoxyribonucleoside 5'-triphosphate + H2O = a 2'-deoxyribonucleoside 5'-phosphate + diphosphate + H(+). Its function is as follows. Nucleoside triphosphate pyrophosphatase. May have a dual role in cell division arrest and in preventing the incorporation of modified nucleotides into cellular nucleic acids. This is Nucleoside triphosphate pyrophosphatase from Nocardia farcinica (strain IFM 10152).